The following is a 338-amino-acid chain: Replication factor C small subunit (338 aa).

An ATP-binding site is contributed by 53-60; it reads GPPGVGKT.

Belongs to the activator 1 small subunits family. RfcS subfamily. As to quaternary structure, heteromultimer composed of small subunits (RfcS) and large subunits (RfcL).

Functionally, part of the RFC clamp loader complex which loads the PCNA sliding clamp onto DNA. The chain is Replication factor C small subunit from Methanosarcina mazei (strain ATCC BAA-159 / DSM 3647 / Goe1 / Go1 / JCM 11833 / OCM 88) (Methanosarcina frisia).